A 412-amino-acid polypeptide reads, in one-letter code: Glucose-1-phosphate adenylyltransferase (412 aa).

Residues Tyr-98, Gly-163, 178–179 (EK), and Ser-189 each bind alpha-D-glucose 1-phosphate.

It belongs to the bacterial/plant glucose-1-phosphate adenylyltransferase family. In terms of assembly, homotetramer.

The enzyme catalyses alpha-D-glucose 1-phosphate + ATP + H(+) = ADP-alpha-D-glucose + diphosphate. The protein operates within glycan biosynthesis; glycogen biosynthesis. In terms of biological role, involved in the biosynthesis of ADP-glucose, a building block required for the elongation reactions to produce glycogen. Catalyzes the reaction between ATP and alpha-D-glucose 1-phosphate (G1P) to produce pyrophosphate and ADP-Glc. In Thermosipho africanus (strain TCF52B), this protein is Glucose-1-phosphate adenylyltransferase.